A 1092-amino-acid polypeptide reads, in one-letter code: SUMO-specific isopeptidase USPL1 (1092 aa).

Disordered stretches follow at residues 145–168 (VYDE…TADS) and 185–207 (TKDP…EGCT). 2 stretches are compositionally biased toward polar residues: residues 148–163 (ETSS…QNPI) and 197–206 (GRPSPQNEGC). The USP domain maps to 227-500 (VQWKNAYALC…EIHIVIWERK (274 aa)). C236 functions as the Nucleophile in the catalytic mechanism. The interval 236 to 495 (CWLDCILSAL…EVPASEIHIV (260 aa)) is SUMO-binding. H456 acts as the Proton acceptor in catalysis. Disordered regions lie at residues 713 to 749 (LKPE…SLKE), 797 to 859 (GGFK…STSC), and 904 to 930 (AALM…GSPN). A compositionally biased stretch (polar residues) spans 732–748 (ADSQTTTSKSLQNQSLK). A compositionally biased stretch (basic residues) spans 810 to 819 (HVSKKARKSA). Residues 821-832 (KPPPISKPPAGP) are compositionally biased toward pro residues. S909 is subject to Phosphoserine.

It belongs to the peptidase C19 family. As to quaternary structure, interacts with ELL.

The protein resides in the nucleus. It is found in the cajal body. SUMO-specific isopeptidase involved in protein desumoylation. Specifically binds SUMO proteins with a higher affinity for SUMO2 and SUMO3 which it cleaves more efficiently. Also able to process full-length SUMO proteins to their mature forms. Plays a key role in RNA polymerase-II-mediated snRNA transcription in the Cajal bodies. Is a component of complexes that can bind to U snRNA genes. This chain is SUMO-specific isopeptidase USPL1 (USPL1), found in Homo sapiens (Human).